The primary structure comprises 330 residues: Anthranilate phosphoribosyltransferase (330 aa).

5-phospho-alpha-D-ribose 1-diphosphate contacts are provided by residues G75, 78–79 (GD), T83, 85–88 (NVST), 103–111 (KHGNRAASS), and A115. G75 lines the anthranilate pocket. S87 provides a ligand contact to Mg(2+). Residue N106 participates in anthranilate binding. R161 contacts anthranilate. Mg(2+) contacts are provided by D220 and E221.

Belongs to the anthranilate phosphoribosyltransferase family. Homodimer. Mg(2+) serves as cofactor.

It catalyses the reaction N-(5-phospho-beta-D-ribosyl)anthranilate + diphosphate = 5-phospho-alpha-D-ribose 1-diphosphate + anthranilate. It functions in the pathway amino-acid biosynthesis; L-tryptophan biosynthesis; L-tryptophan from chorismate: step 2/5. Its function is as follows. Catalyzes the transfer of the phosphoribosyl group of 5-phosphorylribose-1-pyrophosphate (PRPP) to anthranilate to yield N-(5'-phosphoribosyl)-anthranilate (PRA). This Erythrobacter litoralis (strain HTCC2594) protein is Anthranilate phosphoribosyltransferase.